A 388-amino-acid polypeptide reads, in one-letter code: Succinate--CoA ligase [ADP-forming] subunit beta (388 aa).

Positions 9-244 (KEILRKYGVT…LDEEDPAEIE (236 aa)) constitute an ATP-grasp domain. Residues K46, 53-55 (GRG), E99, A102, and E107 each bind ATP. Mg(2+)-binding residues include N199 and D213. Residues N264 and 321–323 (GIM) each bind substrate.

The protein belongs to the succinate/malate CoA ligase beta subunit family. As to quaternary structure, heterotetramer of two alpha and two beta subunits. Mg(2+) serves as cofactor.

It carries out the reaction succinate + ATP + CoA = succinyl-CoA + ADP + phosphate. The catalysed reaction is GTP + succinate + CoA = succinyl-CoA + GDP + phosphate. It functions in the pathway carbohydrate metabolism; tricarboxylic acid cycle; succinate from succinyl-CoA (ligase route): step 1/1. Functionally, succinyl-CoA synthetase functions in the citric acid cycle (TCA), coupling the hydrolysis of succinyl-CoA to the synthesis of either ATP or GTP and thus represents the only step of substrate-level phosphorylation in the TCA. The beta subunit provides nucleotide specificity of the enzyme and binds the substrate succinate, while the binding sites for coenzyme A and phosphate are found in the alpha subunit. The sequence is that of Succinate--CoA ligase [ADP-forming] subunit beta from Janthinobacterium sp. (strain Marseille) (Minibacterium massiliensis).